Here is a 240-residue protein sequence, read N- to C-terminus: UDP-2,3-diacylglucosamine hydrolase (240 aa).

5 residues coordinate Mn(2+): aspartate 8, histidine 10, aspartate 41, asparagine 79, and histidine 114. 79–80 serves as a coordination point for substrate; sequence NR. Substrate is bound by residues aspartate 122, serine 160, asparagine 164, lysine 167, and histidine 195. Positions 195 and 197 each coordinate Mn(2+).

This sequence belongs to the LpxH family. The cofactor is Mn(2+).

Its subcellular location is the cell inner membrane. The catalysed reaction is UDP-2-N,3-O-bis[(3R)-3-hydroxytetradecanoyl]-alpha-D-glucosamine + H2O = 2-N,3-O-bis[(3R)-3-hydroxytetradecanoyl]-alpha-D-glucosaminyl 1-phosphate + UMP + 2 H(+). It participates in glycolipid biosynthesis; lipid IV(A) biosynthesis; lipid IV(A) from (3R)-3-hydroxytetradecanoyl-[acyl-carrier-protein] and UDP-N-acetyl-alpha-D-glucosamine: step 4/6. Its function is as follows. Hydrolyzes the pyrophosphate bond of UDP-2,3-diacylglucosamine to yield 2,3-diacylglucosamine 1-phosphate (lipid X) and UMP by catalyzing the attack of water at the alpha-P atom. Involved in the biosynthesis of lipid A, a phosphorylated glycolipid that anchors the lipopolysaccharide to the outer membrane of the cell. The polypeptide is UDP-2,3-diacylglucosamine hydrolase (Proteus mirabilis (strain HI4320)).